The primary structure comprises 76 residues: Kappa-actitoxin-Avd4d (76 aa).

The first 19 residues, 1 to 19 (MNKALFLCLVVLCAAVVFA), serve as a signal peptide directing secretion. Positions 20 to 31 (AEDLQKAKHVPF) are excised as a propeptide. 3 disulfides stabilise this stretch: C37-C72, C39-C65, and C55-C73.

It belongs to the sea anemone type 3 (BDS) potassium channel toxin family. As to expression, moderately expressed in the ectodermal tissue from the distal and proximal tentacles, body wall, and oral disk.

It is found in the secreted. The protein resides in the nematocyst. Its function is as follows. Blocks Kv3 voltage-gated potassium channels. Reduces blood pressure. The protein is Kappa-actitoxin-Avd4d of Anemonia viridis (Snakelocks anemone).